An 861-amino-acid chain; its full sequence is ToMV resistant protein Tm-2 netted virescent (861 aa).

The stretch at V63–D83 forms a coiled coil. The region spanning D162–D388 is the NB-ARC domain. ATP is bound at residue G185–T192. LRR repeat units lie at residues L225 to S248, L305 to F327, D388 to Y411, L449 to G472, V510 to K536, M585 to L608, T609 to S631, I652 to P680, L689 to P710, L712 to Y735, P736 to P758, L784 to G807, and F810 to M835.

Belongs to the disease resistance NB-LRR family. (Microbial infection) Interacts with tobamoviruses mouvement protein at the plasma membrane; this interaction triggers defense responses leading to programmed cell death. In terms of assembly, binds to HSP90 proteins; this interaction seems required for defense responses toward tobamoviruses.

It localises to the cell membrane. Functionally, inhibitor of viral mouvements which confers resistance to some tobamoviruses including tomato mosaic virus (ToMV) (e.g. isolate L and W3) and tobacco mosaic virus (TMV), but not to resistance-breaking isolates (e.g. Ltbl) ToMV and tomato brown rugose fruit virus (ToBRFV). Elicits a hypersensitive reaction in response to avirulent (Avr) movement proteins from resistance inducing tobamoviruses (e.g. ToMV and TMV) strains, thus leading to programmed cell death. This is ToMV resistant protein Tm-2 netted virescent from Solanum lycopersicum (Tomato).